The sequence spans 180 residues: UPF0743 protein C215.06c (180 aa).

2 C2HC LYAR-type zinc fingers span residues 1–26 (MVSFCCEVCQDIIKKPKLDQHRSRCH) and 27–51 (GAYFTCIDCNTTFERTDYRNHTSCM). Residues Cys-6, Cys-9, His-21, Cys-25, Cys-32, Cys-35, His-47, and Cys-50 each coordinate Zn(2+). The segment at 61–125 (LYRPTKKELK…KETVSSPAEQ (65 aa)) is disordered. Polar residues predominate over residues 77 to 95 (NAVNSKELSPNTDNQNTPA). Ser-85 is modified (phosphoserine). Positions 100–111 (HSLDENEKDKEN) are enriched in basic and acidic residues.

Belongs to the UPF0743 family.

The protein localises to the nucleus. This Schizosaccharomyces pombe (strain 972 / ATCC 24843) (Fission yeast) protein is UPF0743 protein C215.06c.